Consider the following 175-residue polypeptide: Pycsar effector protein RsPycTM (175 aa).

The next 3 membrane-spanning stretches (helical) occupy residues 17–37, 44–64, and 146–166; these read AKNA…ITLL, PLGF…AAII, and AGSL…LFCI.

The protein resides in the cell inner membrane. Functionally, pycsar (pyrimidine cyclase system for antiphage resistance) provides immunity against bacteriophage. The pyrimidine cyclase (PycC) synthesizes cyclic nucleotides in response to infection; these serve as specific second messenger signals. The signals activate the nearby effector, leading to bacterial cell death and abortive phage infection. A clade A Pycsar system. In terms of biological role, the effector gene of a two-gene Pycsar system. Expression of this and uridylate cyclase RsPycC (AC A0A4R2TZQ0) probably confers resistance to bacteriophage. The genes are probably only expressed in response to bacteriophage infection. Probably only responds to cUMP (produced by its cognate NTP cyclase), acts by impairing membrane integrity. This is Pycsar effector protein RsPycTM from Rhizobium sp. (strain PP-F2F-G36).